Consider the following 593-residue polypeptide: Mitoguardin 2 (593 aa).

Helical transmembrane passes span 11–31 and 42–62; these read MIQA…TTFG and PGLR…ALAA. 2 disordered regions span residues 103 to 141 and 196 to 231; these read GYSS…VASM and SVGQ…SQRK. Composition is skewed to low complexity over residues 106 to 116 and 123 to 141; these read SRRVQSPSSKS and ISSI…VASM. Ser-132 carries the phosphoserine modification. Residue Thr-206 is modified to Phosphothreonine. Phosphoserine occurs at positions 220, 224, and 228. Thr-273 is subject to Phosphothreonine. A phosphoserine mark is found at Ser-276 and Ser-295. The FFAT motif lies at 292–298; it reads SFFSATE.

The protein belongs to the mitoguardin family. As to quaternary structure, homodimer and heterodimer; forms heterodimers with MIGA1. Interacts with PLD6/MitoPLD. Interacts (via phosphorylated FFAT motif) with MOSPD2, VAPA and VAPB. In terms of processing, phosphorylation at Ser-295 of the FFAT motif activates interaction with MOSPD2, VAPA and VAPB.

The protein localises to the mitochondrion outer membrane. Regulator of mitochondrial fusion: acts by forming homo- and heterodimers at the mitochondrial outer membrane and facilitating the formation of PLD6/MitoPLD dimers. May act by regulating phospholipid metabolism via PLD6/MitoPLD. In Homo sapiens (Human), this protein is Mitoguardin 2.